Here is a 617-residue protein sequence, read N- to C-terminus: 1-deoxy-D-xylulose-5-phosphate synthase (617 aa).

Thiamine diphosphate is bound by residues His-76 and 117-119; that span reads GHS. Asp-148 contributes to the Mg(2+) binding site. Thiamine diphosphate-binding positions include 149 to 150, Asn-177, Tyr-285, and Glu-366; that span reads GA. Asn-177 is a Mg(2+) binding site.

This sequence belongs to the transketolase family. DXPS subfamily. In terms of assembly, homodimer. It depends on Mg(2+) as a cofactor. Thiamine diphosphate is required as a cofactor.

It catalyses the reaction D-glyceraldehyde 3-phosphate + pyruvate + H(+) = 1-deoxy-D-xylulose 5-phosphate + CO2. The protein operates within metabolic intermediate biosynthesis; 1-deoxy-D-xylulose 5-phosphate biosynthesis; 1-deoxy-D-xylulose 5-phosphate from D-glyceraldehyde 3-phosphate and pyruvate: step 1/1. Its function is as follows. Catalyzes the acyloin condensation reaction between C atoms 2 and 3 of pyruvate and glyceraldehyde 3-phosphate to yield 1-deoxy-D-xylulose-5-phosphate (DXP). The sequence is that of 1-deoxy-D-xylulose-5-phosphate synthase from Histophilus somni (strain 2336) (Haemophilus somnus).